Consider the following 71-residue polypeptide: Beta-defensin 131A (71 aa).

A signal peptide spans 1-22 (MRVLFFVFGVLSLMFTVPPARS). Disulfide bonds link Cys29–Cys57, Cys37–Cys51, and Cys41–Cys58.

This sequence belongs to the beta-defensin family.

It is found in the secreted. Its function is as follows. Has antibacterial activity. Upon stimulation with lipoteichoic acid, promotes cytokines and chemokines production and secretion. This Pan troglodytes (Chimpanzee) protein is Beta-defensin 131A.